The following is a 573-amino-acid chain: Dihydroxy-acid dehydratase (573 aa).

Positions 1–14 (MTEKSPKPHKRSDA) are enriched in basic and acidic residues. The segment at 1–21 (MTEKSPKPHKRSDAITEGPNR) is disordered. Residue cysteine 55 participates in [2Fe-2S] cluster binding. Aspartate 87 contributes to the Mg(2+) binding site. Cysteine 128 contacts [2Fe-2S] cluster. Positions 129 and 130 each coordinate Mg(2+). Residue lysine 130 is modified to N6-carboxylysine. Residue cysteine 200 participates in [2Fe-2S] cluster binding. Glutamate 450 provides a ligand contact to Mg(2+). The active-site Proton acceptor is the serine 476.

This sequence belongs to the IlvD/Edd family. In terms of assembly, homodimer. Requires [2Fe-2S] cluster as cofactor. Mg(2+) serves as cofactor.

The enzyme catalyses (2R)-2,3-dihydroxy-3-methylbutanoate = 3-methyl-2-oxobutanoate + H2O. It catalyses the reaction (2R,3R)-2,3-dihydroxy-3-methylpentanoate = (S)-3-methyl-2-oxopentanoate + H2O. It participates in amino-acid biosynthesis; L-isoleucine biosynthesis; L-isoleucine from 2-oxobutanoate: step 3/4. The protein operates within amino-acid biosynthesis; L-valine biosynthesis; L-valine from pyruvate: step 3/4. Functions in the biosynthesis of branched-chain amino acids. Catalyzes the dehydration of (2R,3R)-2,3-dihydroxy-3-methylpentanoate (2,3-dihydroxy-3-methylvalerate) into 2-oxo-3-methylpentanoate (2-oxo-3-methylvalerate) and of (2R)-2,3-dihydroxy-3-methylbutanoate (2,3-dihydroxyisovalerate) into 2-oxo-3-methylbutanoate (2-oxoisovalerate), the penultimate precursor to L-isoleucine and L-valine, respectively. The sequence is that of Dihydroxy-acid dehydratase from Koribacter versatilis (strain Ellin345).